A 453-amino-acid polypeptide reads, in one-letter code: tRNA modification GTPase MnmE (453 aa).

Residues arginine 22, glutamate 79, and lysine 119 each contribute to the (6S)-5-formyl-5,6,7,8-tetrahydrofolate site. The 162-residue stretch at 215–376 (GMKVVIAGRP…LRQHLKECMG (162 aa)) folds into the TrmE-type G domain. Asparagine 225 contributes to the K(+) binding site. GTP contacts are provided by residues 225–230 (NAGKSS), 244–250 (TDIAGTT), 269–272 (DTAG), and 334–337 (NKAD). Mg(2+) is bound at residue serine 229. K(+) contacts are provided by threonine 244, isoleucine 246, and threonine 249. Threonine 250 contributes to the Mg(2+) binding site. (6S)-5-formyl-5,6,7,8-tetrahydrofolate is bound at residue lysine 453.

The protein belongs to the TRAFAC class TrmE-Era-EngA-EngB-Septin-like GTPase superfamily. TrmE GTPase family. Homodimer. Heterotetramer of two MnmE and two MnmG subunits. The cofactor is K(+).

The protein localises to the cytoplasm. Its function is as follows. Exhibits a very high intrinsic GTPase hydrolysis rate. Involved in the addition of a carboxymethylaminomethyl (cmnm) group at the wobble position (U34) of certain tRNAs, forming tRNA-cmnm(5)s(2)U34. In Vibrio cholerae serotype O1 (strain ATCC 39541 / Classical Ogawa 395 / O395), this protein is tRNA modification GTPase MnmE.